Reading from the N-terminus, the 130-residue chain is Glycine cleavage system H protein (130 aa).

Residues 25-106 form the Lipoyl-binding domain; that stretch reads MALIGISDFA…PFDSWMIKVK (82 aa). At K66 the chain carries N6-lipoyllysine.

Belongs to the GcvH family. The glycine cleavage system is composed of four proteins: P, T, L and H. Requires (R)-lipoate as cofactor.

In terms of biological role, the glycine cleavage system catalyzes the degradation of glycine. The H protein shuttles the methylamine group of glycine from the P protein to the T protein. This Leptospira interrogans serogroup Icterohaemorrhagiae serovar copenhageni (strain Fiocruz L1-130) protein is Glycine cleavage system H protein.